We begin with the raw amino-acid sequence, 216 residues long: Probable nicotinate-nucleotide adenylyltransferase (216 aa).

The protein belongs to the NadD family.

It catalyses the reaction nicotinate beta-D-ribonucleotide + ATP + H(+) = deamido-NAD(+) + diphosphate. It participates in cofactor biosynthesis; NAD(+) biosynthesis; deamido-NAD(+) from nicotinate D-ribonucleotide: step 1/1. In terms of biological role, catalyzes the reversible adenylation of nicotinate mononucleotide (NaMN) to nicotinic acid adenine dinucleotide (NaAD). This chain is Probable nicotinate-nucleotide adenylyltransferase, found in Marinobacter nauticus (strain ATCC 700491 / DSM 11845 / VT8) (Marinobacter aquaeolei).